The primary structure comprises 432 residues: Adenylosuccinate synthetase (432 aa).

GTP contacts are provided by residues Gly-13–Lys-19 and Gly-41–Thr-43. Asp-14 acts as the Proton acceptor in catalysis. Asp-14 and Gly-41 together coordinate Mg(2+). Residues Asp-14–Lys-17, Asn-39–His-42, Thr-130, Arg-144, Gln-225, Thr-240, and Arg-304 contribute to the IMP site. The Proton donor role is filled by His-42. Ala-300–Arg-306 contributes to the substrate binding site. GTP is bound by residues Arg-306, Lys-332–Asp-334, and Ser-415–Gly-417.

The protein belongs to the adenylosuccinate synthetase family. Homodimer. It depends on Mg(2+) as a cofactor.

Its subcellular location is the cytoplasm. It catalyses the reaction IMP + L-aspartate + GTP = N(6)-(1,2-dicarboxyethyl)-AMP + GDP + phosphate + 2 H(+). Its pathway is purine metabolism; AMP biosynthesis via de novo pathway; AMP from IMP: step 1/2. In terms of biological role, plays an important role in the de novo pathway of purine nucleotide biosynthesis. Catalyzes the first committed step in the biosynthesis of AMP from IMP. In Klebsiella pneumoniae subsp. pneumoniae (strain ATCC 700721 / MGH 78578), this protein is Adenylosuccinate synthetase.